Reading from the N-terminus, the 314-residue chain is RNA 2'-O-methyltransferase FBLL1 (314 aa).

Residues 1–59 (MKPAGGRGGWGWGGGKGGSKGGDTGSGTKGGFGARTRGSSGGGRGRGRGGGGGGGGGGG) are compositionally biased toward gly residues. The segment at 1–82 (MKPAGGRGGW…RRKKGITVSV (82 aa)) is disordered. Arg-7 bears the Omega-N-methylarginine mark. Residues 64–77 (RGGPGKNKNRRKKG) show a composition bias toward basic residues. Residues 166-167 (TT), 185-186 (EF), 210-211 (DA), and 230-233 (DVAQ) contribute to the S-adenosyl-L-methionine site.

The protein belongs to the methyltransferase superfamily. Fibrillarin family. In terms of assembly, component of a box C/D small nucleolar ribonucleoprotein (snoRNP) complex composed of FBLL1, SNU13/NHP2L1, NOP56 and NOP58 and a guide snoRNA which mediates 2'-hydroxyl ribose methylation in RNAs.

The protein localises to the nucleus. The protein resides in the nucleolus. The catalysed reaction is a ribonucleotide in RNA + S-adenosyl-L-methionine = a 2'-O-methylribonucleotide in RNA + S-adenosyl-L-homocysteine + H(+). In terms of biological role, S-adenosyl-L-methionine-dependent RNA methyltransferase that catalyzes 2'-hydroxyl ribose methylation in RNAs. Functions as part of box C/D small nucleolar ribonucleoprotein (snoRNP) complexes, where guide snoRNAs ensure methylation specificity through base pairing with RNA substrates. Exhibits broad substrate specificity, methylating multiple sites on ribosomal RNAs (rRNAs) and messenger RNAs (mRNAs) depending on the guide snoRNA incorporated in the complex. Specifically expressed in brain, it regulates the expression of GAP43 by stabilizing its mRNA through methylation and thereby plays an indirect role in neuronal differentiation. The sequence is that of RNA 2'-O-methyltransferase FBLL1 from Mus musculus (Mouse).